The chain runs to 435 residues: Adenylosuccinate synthetase (435 aa).

Residues 13 to 19 (GDEGKGK) and 41 to 43 (GHT) each bind GTP. Asp14 serves as the catalytic Proton acceptor. Mg(2+) contacts are provided by Asp14 and Gly41. IMP is bound by residues 14 to 17 (DEGK), 39 to 42 (NAGH), Thr130, Arg144, Gln225, Thr240, and Arg304. The active-site Proton donor is the His42. 300–306 (ATTGRPR) contacts substrate. GTP contacts are provided by residues Arg306, 332-334 (KLD), and 419-421 (STG).

Belongs to the adenylosuccinate synthetase family. In terms of assembly, homodimer. It depends on Mg(2+) as a cofactor.

The protein localises to the cytoplasm. The catalysed reaction is IMP + L-aspartate + GTP = N(6)-(1,2-dicarboxyethyl)-AMP + GDP + phosphate + 2 H(+). Its pathway is purine metabolism; AMP biosynthesis via de novo pathway; AMP from IMP: step 1/2. Plays an important role in the de novo pathway of purine nucleotide biosynthesis. Catalyzes the first committed step in the biosynthesis of AMP from IMP. In Nitrosospira multiformis (strain ATCC 25196 / NCIMB 11849 / C 71), this protein is Adenylosuccinate synthetase.